A 208-amino-acid chain; its full sequence is Large ribosomal subunit protein uL3 (208 aa).

The tract at residues 116–146 is disordered; sequence GFQGAIKRHGQSRGPMAHGSRYHRRPGSMGP.

This sequence belongs to the universal ribosomal protein uL3 family. As to quaternary structure, part of the 50S ribosomal subunit. Forms a cluster with proteins L14 and L19.

One of the primary rRNA binding proteins, it binds directly near the 3'-end of the 23S rRNA, where it nucleates assembly of the 50S subunit. The polypeptide is Large ribosomal subunit protein uL3 (Streptococcus mutans serotype c (strain ATCC 700610 / UA159)).